The primary structure comprises 466 residues: ATP-dependent protease ATPase subunit HslU (466 aa).

ATP-binding positions include isoleucine 18, 60–65, aspartate 279, glutamate 344, and arginine 416; that span reads GVGKTE.

Belongs to the ClpX chaperone family. HslU subfamily. As to quaternary structure, a double ring-shaped homohexamer of HslV is capped on each side by a ring-shaped HslU homohexamer. The assembly of the HslU/HslV complex is dependent on binding of ATP.

The protein localises to the cytoplasm. Functionally, ATPase subunit of a proteasome-like degradation complex; this subunit has chaperone activity. The binding of ATP and its subsequent hydrolysis by HslU are essential for unfolding of protein substrates subsequently hydrolyzed by HslV. HslU recognizes the N-terminal part of its protein substrates and unfolds these before they are guided to HslV for hydrolysis. This chain is ATP-dependent protease ATPase subunit HslU, found in Syntrophomonas wolfei subsp. wolfei (strain DSM 2245B / Goettingen).